A 240-amino-acid polypeptide reads, in one-letter code: ATP-dependent dethiobiotin synthetase BioD (240 aa).

Residue 13–18 coordinates ATP; that stretch reads GVGKTI. Thr17 serves as a coordination point for Mg(2+). Residue Lys38 is part of the active site. Thr42 contacts substrate. ATP is bound by residues Asp55, 116–119, and 214–216; these read EGVG and PYL. Residues Asp55 and Glu116 each coordinate Mg(2+).

Belongs to the dethiobiotin synthetase family. Homodimer. Mg(2+) is required as a cofactor.

The protein localises to the cytoplasm. It catalyses the reaction (7R,8S)-7,8-diammoniononanoate + CO2 + ATP = (4R,5S)-dethiobiotin + ADP + phosphate + 3 H(+). Its pathway is cofactor biosynthesis; biotin biosynthesis; biotin from 7,8-diaminononanoate: step 1/2. Its function is as follows. Catalyzes a mechanistically unusual reaction, the ATP-dependent insertion of CO2 between the N7 and N8 nitrogen atoms of 7,8-diaminopelargonic acid (DAPA, also called 7,8-diammoniononanoate) to form a ureido ring. In Thermodesulfovibrio yellowstonii (strain ATCC 51303 / DSM 11347 / YP87), this protein is ATP-dependent dethiobiotin synthetase BioD.